The primary structure comprises 133 residues: ATP synthase epsilon chain, chloroplastic (133 aa).

It belongs to the ATPase epsilon chain family. In terms of assembly, F-type ATPases have 2 components, CF(1) - the catalytic core - and CF(0) - the membrane proton channel. CF(1) has five subunits: alpha(3), beta(3), gamma(1), delta(1), epsilon(1). CF(0) has three main subunits: a, b and c.

The protein localises to the plastid. It localises to the chloroplast thylakoid membrane. Its function is as follows. Produces ATP from ADP in the presence of a proton gradient across the membrane. The sequence is that of ATP synthase epsilon chain, chloroplastic from Citrus sinensis (Sweet orange).